The primary structure comprises 331 residues: ADP-L-glycero-D-manno-heptose-6-epimerase (331 aa).

Residues 11-12, 32-33, K39, K54, 75-79, and N92 each bind NADP(+); these read FI, DN, and EGACS. Y139 (proton acceptor) is an active-site residue. K143 contributes to the NADP(+) binding site. N168 serves as a coordination point for substrate. Residues V169 and K177 each contribute to the NADP(+) site. Catalysis depends on K177, which acts as the Proton acceptor. Substrate is bound by residues R179, H186, 200 to 203, R213, and Y292; that span reads FGEY.

Belongs to the NAD(P)-dependent epimerase/dehydratase family. HldD subfamily. Homopentamer. NADP(+) serves as cofactor.

The catalysed reaction is ADP-D-glycero-beta-D-manno-heptose = ADP-L-glycero-beta-D-manno-heptose. Its pathway is nucleotide-sugar biosynthesis; ADP-L-glycero-beta-D-manno-heptose biosynthesis; ADP-L-glycero-beta-D-manno-heptose from D-glycero-beta-D-manno-heptose 7-phosphate: step 4/4. Catalyzes the interconversion between ADP-D-glycero-beta-D-manno-heptose and ADP-L-glycero-beta-D-manno-heptose via an epimerization at carbon 6 of the heptose. This chain is ADP-L-glycero-D-manno-heptose-6-epimerase, found in Ralstonia pickettii (strain 12J).